A 74-amino-acid polypeptide reads, in one-letter code: Exodeoxyribonuclease 7 small subunit (74 aa).

This sequence belongs to the XseB family. As to quaternary structure, heterooligomer composed of large and small subunits.

The protein localises to the cytoplasm. It carries out the reaction Exonucleolytic cleavage in either 5'- to 3'- or 3'- to 5'-direction to yield nucleoside 5'-phosphates.. Bidirectionally degrades single-stranded DNA into large acid-insoluble oligonucleotides, which are then degraded further into small acid-soluble oligonucleotides. The protein is Exodeoxyribonuclease 7 small subunit of Bdellovibrio bacteriovorus (strain ATCC 15356 / DSM 50701 / NCIMB 9529 / HD100).